The following is a 553-amino-acid chain: Arginine--tRNA ligase (553 aa).

The short motif at 130 to 140 (ANPTGDLHIGH) is the 'HIGH' region element.

It belongs to the class-I aminoacyl-tRNA synthetase family. In terms of assembly, monomer.

It localises to the cytoplasm. It catalyses the reaction tRNA(Arg) + L-arginine + ATP = L-arginyl-tRNA(Arg) + AMP + diphosphate. The protein is Arginine--tRNA ligase of Staphylococcus aureus (strain MRSA252).